Reading from the N-terminus, the 205-residue chain is MSIMSYNGGAVMAMKGKNCVAIAADRRFGIQAQMVTTDFQKIFPMGDRLYIGLAGLATDVQTVAQRLKFRLNLYELKEGRQIKPYTLMSMVANLLYEKRFGPYYTEPVIAGLDPKTFKPFICSLDLIGCPMVTDDFVVSGTCTEQMYGMCESLWEPNMDPEHLFETISQAMLNAVDRDAVSGMGVIVHIIEKDKITTRTLKARMD.

At serine 2 the chain carries N-acetylserine. Residue lysine 77 is modified to N6-acetyllysine.

Belongs to the peptidase T1B family. In terms of assembly, the 26S proteasome consists of a 20S proteasome core and two 19S regulatory subunits. The 20S proteasome core is a barrel-shaped complex made of 28 subunits that are arranged in four stacked rings. The two outer rings are each formed by seven alpha subunits, and the two inner rings are formed by seven beta subunits. The proteolytic activity is exerted by three beta-subunits PSMB5, PSMB6 and PSMB7.

The protein resides in the cytoplasm. It is found in the nucleus. In terms of biological role, non-catalytic component of the 20S core proteasome complex involved in the proteolytic degradation of most intracellular proteins. This complex plays numerous essential roles within the cell by associating with different regulatory particles. Associated with two 19S regulatory particles, forms the 26S proteasome and thus participates in the ATP-dependent degradation of ubiquitinated proteins. The 26S proteasome plays a key role in the maintenance of protein homeostasis by removing misfolded or damaged proteins that could impair cellular functions, and by removing proteins whose functions are no longer required. Associated with the PA200 or PA28, the 20S proteasome mediates ubiquitin-independent protein degradation. This type of proteolysis is required in several pathways including spermatogenesis (20S-PA200 complex) or generation of a subset of MHC class I-presented antigenic peptides (20S-PA28 complex). This is Proteasome subunit beta type-3 (PSMB3) from Bos taurus (Bovine).